The following is a 339-amino-acid chain: Dihydroorotase (339 aa).

Zn(2+) is bound by residues His-12 and His-14. Substrate contacts are provided by residues 14–16 (HVR) and Asn-40. Lys-94, His-133, His-167, and Asp-239 together coordinate Zn(2+). N6-carboxylysine is present on Lys-94. Residue His-133 coordinates substrate. Asp-239 is a catalytic residue. His-243 and Ala-255 together coordinate substrate.

Belongs to the metallo-dependent hydrolases superfamily. DHOase family. Class II DHOase subfamily. Homodimer. Zn(2+) is required as a cofactor.

It carries out the reaction (S)-dihydroorotate + H2O = N-carbamoyl-L-aspartate + H(+). The protein operates within pyrimidine metabolism; UMP biosynthesis via de novo pathway; (S)-dihydroorotate from bicarbonate: step 3/3. Its function is as follows. Catalyzes the reversible cyclization of carbamoyl aspartate to dihydroorotate. In Helicobacter pylori (strain P12), this protein is Dihydroorotase.